A 110-amino-acid polypeptide reads, in one-letter code: Protein RnfH (110 aa).

A disordered region spans residues 86 to 110; sequence RQRRVEKSRQEGSVEGRKWLPKDSR. Basic and acidic residues predominate over residues 88 to 110; it reads RRVEKSRQEGSVEGRKWLPKDSR.

The protein belongs to the UPF0125 (RnfH) family.

This Paraburkholderia phymatum (strain DSM 17167 / CIP 108236 / LMG 21445 / STM815) (Burkholderia phymatum) protein is Protein RnfH.